Consider the following 92-residue polypeptide: Small ribosomal subunit protein uS19 (92 aa).

The protein belongs to the universal ribosomal protein uS19 family.

Protein S19 forms a complex with S13 that binds strongly to the 16S ribosomal RNA. This Picosynechococcus sp. (strain ATCC 27264 / PCC 7002 / PR-6) (Agmenellum quadruplicatum) protein is Small ribosomal subunit protein uS19.